Consider the following 312-residue polypeptide: tRNA dimethylallyltransferase (312 aa).

Position 11 to 18 (11 to 18 (GPTAAGKS)) interacts with ATP. 13–18 (TAAGKS) lines the substrate pocket. Interaction with substrate tRNA stretches follow at residues 36–39 (DSAT), 160–164 (QRIQR), and 243–248 (RCVGYR).

Belongs to the IPP transferase family. Monomer. Mg(2+) is required as a cofactor.

It carries out the reaction adenosine(37) in tRNA + dimethylallyl diphosphate = N(6)-dimethylallyladenosine(37) in tRNA + diphosphate. In terms of biological role, catalyzes the transfer of a dimethylallyl group onto the adenine at position 37 in tRNAs that read codons beginning with uridine, leading to the formation of N6-(dimethylallyl)adenosine (i(6)A). This chain is tRNA dimethylallyltransferase, found in Bordetella avium (strain 197N).